Consider the following 345-residue polypeptide: Dihydroorotase (345 aa).

Residues H13 and H15 each coordinate Zn(2+). Substrate contacts are provided by residues 15-17 and N41; that span reads HFR. K98, H135, and H173 together coordinate Zn(2+). K98 carries the N6-carboxylysine modification. H135 lines the substrate pocket. A substrate-binding site is contributed by L218. Residue D246 coordinates Zn(2+). The active site involves D246. H250 and A262 together coordinate substrate.

It belongs to the metallo-dependent hydrolases superfamily. DHOase family. Class II DHOase subfamily. Homodimer. Requires Zn(2+) as cofactor.

It catalyses the reaction (S)-dihydroorotate + H2O = N-carbamoyl-L-aspartate + H(+). It participates in pyrimidine metabolism; UMP biosynthesis via de novo pathway; (S)-dihydroorotate from bicarbonate: step 3/3. Functionally, catalyzes the reversible cyclization of carbamoyl aspartate to dihydroorotate. This chain is Dihydroorotase, found in Shewanella piezotolerans (strain WP3 / JCM 13877).